The chain runs to 144 residues: 3-hydroxyacyl-[acyl-carrier-protein] dehydratase FabZ (144 aa).

The active site involves H51.

The protein belongs to the thioester dehydratase family. FabZ subfamily.

It localises to the cytoplasm. It carries out the reaction a (3R)-hydroxyacyl-[ACP] = a (2E)-enoyl-[ACP] + H2O. In terms of biological role, involved in unsaturated fatty acids biosynthesis. Catalyzes the dehydration of short chain beta-hydroxyacyl-ACPs and long chain saturated and unsaturated beta-hydroxyacyl-ACPs. The sequence is that of 3-hydroxyacyl-[acyl-carrier-protein] dehydratase FabZ (fabZ1) from Enterococcus faecalis (strain ATCC 700802 / V583).